The chain runs to 173 residues: RNA pyrophosphohydrolase (173 aa).

The region spanning 6–149 (GFRANVGIIL…KRGVYRRALQ (144 aa)) is the Nudix hydrolase domain. The short motif at 38–59 (GGIDRGETPMDAMYRELWEEVG) is the Nudix box element.

The protein belongs to the Nudix hydrolase family. RppH subfamily. A divalent metal cation serves as cofactor.

Its function is as follows. Accelerates the degradation of transcripts by removing pyrophosphate from the 5'-end of triphosphorylated RNA, leading to a more labile monophosphorylated state that can stimulate subsequent ribonuclease cleavage. The sequence is that of RNA pyrophosphohydrolase from Psychrobacter arcticus (strain DSM 17307 / VKM B-2377 / 273-4).